The sequence spans 147 residues: uncharacterized protein (147 aa).

The chain crosses the membrane as a helical span at residues 63 to 79 (LFIVACSAVFATIAYIN).

It belongs to the FUN14 family.

The protein localises to the membrane. This is an uncharacterized protein from Schizosaccharomyces pombe (strain 972 / ATCC 24843) (Fission yeast).